A 160-amino-acid polypeptide reads, in one-letter code: uncharacterized protein (160 aa).

4 consecutive transmembrane segments (helical) span residues 7–27 (IFLK…CIFL), 48–68 (LVFI…YQAF), 95–115 (AVTI…MAEI), and 121–141 (IIVI…FAAV).

It is found in the cell membrane. This is an uncharacterized protein from Bacillus subtilis (strain 168).